We begin with the raw amino-acid sequence, 509 residues long: Lysine--tRNA ligase (509 aa).

Mg(2+) contacts are provided by glutamate 418 and glutamate 425.

It belongs to the class-II aminoacyl-tRNA synthetase family. In terms of assembly, homodimer. Mg(2+) is required as a cofactor.

The protein localises to the cytoplasm. The enzyme catalyses tRNA(Lys) + L-lysine + ATP = L-lysyl-tRNA(Lys) + AMP + diphosphate. This chain is Lysine--tRNA ligase, found in Acinetobacter baumannii (strain AB307-0294).